A 192-amino-acid polypeptide reads, in one-letter code: Fanconi anemia core complex-associated protein 20 (192 aa).

The span at 1–16 (MEATRRSRLSLSRRRP) shows a compositional bias: basic residues. Disordered stretches follow at residues 1 to 34 (MEAT…PDGG) and 51 to 151 (LNVD…SSVD). Positions 66–76 (QEPRRSPERPP) are enriched in basic and acidic residues. 2 positions are modified to phosphoserine: Ser119 and Ser149. Positions 132–149 (PSAEEQPSEEQPSQRQSS) are enriched in low complexity. The segment at 156–192 (LQSCPMCQVDFAPGLAQLDIDGHLAQCLADSTDDIEW) adopts a UBZ2-type zinc-finger fold. The Zn(2+) site is built by Cys159, Cys162, His178, and Cys182.

In terms of assembly, component of the Fanconi anemia (FA) complex. Interacts with FANCA; interaction is direct. Interacts with REV1.

It localises to the nucleus. The protein localises to the chromosome. Its function is as follows. Component of the Fanconi anemia (FA) complex required to recruit the FA complex to DNA interstrand cross-links (ICLs) and promote ICLs repair. Following DNA damage recognizes and binds 'Lys-63'-linked ubiquitin generated by RNF8 at ICLs and recruits other components of the FA complex. Promotes translesion synthesis via interaction with REV1. In Bos taurus (Bovine), this protein is Fanconi anemia core complex-associated protein 20.